The following is a 75-amino-acid chain: Putative sulfur carrier protein MJ0990 (75 aa).

The active-site Cysteine persulfide intermediate is the C15.

It belongs to the sulfur carrier protein TusA family.

The chain is Putative sulfur carrier protein MJ0990 from Methanocaldococcus jannaschii (strain ATCC 43067 / DSM 2661 / JAL-1 / JCM 10045 / NBRC 100440) (Methanococcus jannaschii).